Reading from the N-terminus, the 494-residue chain is Psoralen synthase (494 aa).

Residues 12–29 (YFFSLFLVTIFLYKWLTL) traverse the membrane as a helical segment. Cys-436 is a heme binding site.

This sequence belongs to the cytochrome P450 family.

It is found in the endoplasmic reticulum membrane. It localises to the microsome membrane. It carries out the reaction (7S)-marmesin + reduced [NADPH--hemoprotein reductase] + O2 = psoralen + acetone + oxidized [NADPH--hemoprotein reductase] + 2 H2O + H(+). Its activity is regulated as follows. Inhibited by columbianetin. Functionally, involved in linear furanocumarin (psoralen) biosynthesis. Converts marmesin to psoralen. This is Psoralen synthase (CYP71AJ1) from Ammi majus (Bishop's weed).